The chain runs to 261 residues: Cytochrome c oxidase subunit 3 (261 aa).

The Mitochondrial matrix portion of the chain corresponds to 1 to 15 (MAHQAHAYHMVDPSP). Residues 16–34 (WPLTGAVAALLLTSGLAIW) form a helical membrane-spanning segment. Residues 35-40 (FPFNSL) are Mitochondrial intermembrane-facing. Residues 41–66 (ILLTLGLVLLLLTMYQWWRDIVREGT) traverse the membrane as a helical segment. At 67 to 72 (FQGHHT) the chain is on the mitochondrial matrix side. Residues 73–105 (PPVQKGLRYGMILFITSEVFFFLGFFWAFYHSS) form a helical membrane-spanning segment. Topologically, residues 106–128 (LAPTPELGGCWPPTGIVPLNPFE) are mitochondrial intermembrane. Residues 129–152 (VPLLNTAVLLASGVTVTWAHHSIM) traverse the membrane as a helical segment. At 153-155 (EGE) the chain is on the mitochondrial matrix side. A helical membrane pass occupies residues 156–183 (RKQAIHSLTLTILLGFYFTFLQAMEYYE). The Mitochondrial intermembrane segment spans residues 184-190 (APFTIAD). The chain crosses the membrane as a helical span at residues 191 to 223 (GVYGSTFFVATGFHGLHVIIGSTFLAICLLRQI). Residues 224-232 (RYHFTSEHH) are Mitochondrial matrix-facing. The chain crosses the membrane as a helical span at residues 233–256 (FGFEAAAWYWHFVDVVWLFLYISI). The Mitochondrial intermembrane portion of the chain corresponds to 257-261 (YWWGS).

The protein belongs to the cytochrome c oxidase subunit 3 family. As to quaternary structure, component of the cytochrome c oxidase (complex IV, CIV), a multisubunit enzyme composed of 14 subunits. The complex is composed of a catalytic core of 3 subunits MT-CO1, MT-CO2 and MT-CO3, encoded in the mitochondrial DNA, and 11 supernumerary subunits COX4I, COX5A, COX5B, COX6A, COX6B, COX6C, COX7A, COX7B, COX7C, COX8 and NDUFA4, which are encoded in the nuclear genome. The complex exists as a monomer or a dimer and forms supercomplexes (SCs) in the inner mitochondrial membrane with NADH-ubiquinone oxidoreductase (complex I, CI) and ubiquinol-cytochrome c oxidoreductase (cytochrome b-c1 complex, complex III, CIII), resulting in different assemblies (supercomplex SCI(1)III(2)IV(1) and megacomplex MCI(2)III(2)IV(2)).

Its subcellular location is the mitochondrion inner membrane. It carries out the reaction 4 Fe(II)-[cytochrome c] + O2 + 8 H(+)(in) = 4 Fe(III)-[cytochrome c] + 2 H2O + 4 H(+)(out). In terms of biological role, component of the cytochrome c oxidase, the last enzyme in the mitochondrial electron transport chain which drives oxidative phosphorylation. The respiratory chain contains 3 multisubunit complexes succinate dehydrogenase (complex II, CII), ubiquinol-cytochrome c oxidoreductase (cytochrome b-c1 complex, complex III, CIII) and cytochrome c oxidase (complex IV, CIV), that cooperate to transfer electrons derived from NADH and succinate to molecular oxygen, creating an electrochemical gradient over the inner membrane that drives transmembrane transport and the ATP synthase. Cytochrome c oxidase is the component of the respiratory chain that catalyzes the reduction of oxygen to water. Electrons originating from reduced cytochrome c in the intermembrane space (IMS) are transferred via the dinuclear copper A center (CU(A)) of subunit 2 and heme A of subunit 1 to the active site in subunit 1, a binuclear center (BNC) formed by heme A3 and copper B (CU(B)). The BNC reduces molecular oxygen to 2 water molecules using 4 electrons from cytochrome c in the IMS and 4 protons from the mitochondrial matrix. The sequence is that of Cytochrome c oxidase subunit 3 (mt-co3) from Tetraodon nigroviridis (Spotted green pufferfish).